A 160-amino-acid polypeptide reads, in one-letter code: 2-C-methyl-D-erythritol 2,4-cyclodiphosphate synthase (160 aa).

Residues aspartate 10 and histidine 12 each contribute to the a divalent metal cation site. 4-CDP-2-C-methyl-D-erythritol 2-phosphate contacts are provided by residues 10 to 12 and 36 to 37; these read DVH and HS. Histidine 44 provides a ligand contact to a divalent metal cation. Residues 58 to 60, 134 to 137, phenylalanine 141, and arginine 144 each bind 4-CDP-2-C-methyl-D-erythritol 2-phosphate; these read DIG and TTTE.

This sequence belongs to the IspF family. Homotrimer. The cofactor is a divalent metal cation.

It carries out the reaction 4-CDP-2-C-methyl-D-erythritol 2-phosphate = 2-C-methyl-D-erythritol 2,4-cyclic diphosphate + CMP. It functions in the pathway isoprenoid biosynthesis; isopentenyl diphosphate biosynthesis via DXP pathway; isopentenyl diphosphate from 1-deoxy-D-xylulose 5-phosphate: step 4/6. In terms of biological role, involved in the biosynthesis of isopentenyl diphosphate (IPP) and dimethylallyl diphosphate (DMAPP), two major building blocks of isoprenoid compounds. Catalyzes the conversion of 4-diphosphocytidyl-2-C-methyl-D-erythritol 2-phosphate (CDP-ME2P) to 2-C-methyl-D-erythritol 2,4-cyclodiphosphate (ME-CPP) with a corresponding release of cytidine 5-monophosphate (CMP). This Phocaeicola vulgatus (strain ATCC 8482 / DSM 1447 / JCM 5826 / CCUG 4940 / NBRC 14291 / NCTC 11154) (Bacteroides vulgatus) protein is 2-C-methyl-D-erythritol 2,4-cyclodiphosphate synthase.